The primary structure comprises 201 residues: Imidazoleglycerol-phosphate dehydratase (201 aa).

It belongs to the imidazoleglycerol-phosphate dehydratase family.

It is found in the cytoplasm. The enzyme catalyses D-erythro-1-(imidazol-4-yl)glycerol 3-phosphate = 3-(imidazol-4-yl)-2-oxopropyl phosphate + H2O. It functions in the pathway amino-acid biosynthesis; L-histidine biosynthesis; L-histidine from 5-phospho-alpha-D-ribose 1-diphosphate: step 6/9. The protein is Imidazoleglycerol-phosphate dehydratase of Prochlorococcus marinus (strain MIT 9515).